Reading from the N-terminus, the 476-residue chain is Arginine biosynthesis bifunctional protein ArgJ, mitochondrial (476 aa).

Substrate is bound by residues T193, K219, T237, E337, N471, and S476. T237 serves as the catalytic Nucleophile.

This sequence belongs to the ArgJ family. Heterodimer of an alpha and a beta chain. The alpha and beta chains are autoproteolytically processed from a single precursor protein within the mitochondrion.

The protein localises to the mitochondrion matrix. The catalysed reaction is N(2)-acetyl-L-ornithine + L-glutamate = N-acetyl-L-glutamate + L-ornithine. The enzyme catalyses L-glutamate + acetyl-CoA = N-acetyl-L-glutamate + CoA + H(+). The protein operates within amino-acid biosynthesis; L-arginine biosynthesis; L-ornithine and N-acetyl-L-glutamate from L-glutamate and N(2)-acetyl-L-ornithine (cyclic): step 1/1. Its pathway is amino-acid biosynthesis; L-arginine biosynthesis; N(2)-acetyl-L-ornithine from L-glutamate: step 1/4. In terms of biological role, catalyzes two activities which are involved in the cyclic version of arginine biosynthesis: the synthesis of acetylglutamate from glutamate and acetyl-CoA, and of ornithine by transacetylation between acetylornithine and glutamate. The chain is Arginine biosynthesis bifunctional protein ArgJ, mitochondrial from Cryptococcus neoformans var. neoformans serotype D (strain JEC21 / ATCC MYA-565) (Filobasidiella neoformans).